A 113-amino-acid polypeptide reads, in one-letter code: Large ribosomal subunit protein bL19 (113 aa).

It belongs to the bacterial ribosomal protein bL19 family.

Functionally, this protein is located at the 30S-50S ribosomal subunit interface and may play a role in the structure and function of the aminoacyl-tRNA binding site. The polypeptide is Large ribosomal subunit protein bL19 (Mycobacterium avium (strain 104)).